The primary structure comprises 213 residues: Vacuolar protein sorting-associated protein 32 homolog 1 (213 aa).

Coiled coils occupy residues 11-42 (KQET…KKAT) and 118-176 (TNID…QLLQ). A disordered region spans residues 180–213 (IHVPQGNKPARAPAQKQPTAEEDELAALQAEMAL).

Belongs to the SNF7 family. In terms of assembly, component of the endosomal sorting required for transport complex III (ESCRT-III), composed at least of VPS2, VPS20, VPS24 and VPS32. Interacts with SKD1. Interacts with BRO1/ALIX.

It is found in the endosome. In terms of biological role, component of the ESCRT-III complex, which is required for multivesicular bodies (MVBs) formation and sorting of endosomal cargo proteins into MVBs. The ESCRT-III complex is probably involved in the concentration of MVB cargo. The polypeptide is Vacuolar protein sorting-associated protein 32 homolog 1 (VPS32.1) (Arabidopsis thaliana (Mouse-ear cress)).